The chain runs to 404 residues: Glucose-1-phosphate adenylyltransferase (404 aa).

Alpha-D-glucose 1-phosphate-binding positions include Tyr99, Gly164, 179 to 180 (EK), and Ser197.

The protein belongs to the bacterial/plant glucose-1-phosphate adenylyltransferase family.

It catalyses the reaction alpha-D-glucose 1-phosphate + ATP + H(+) = ADP-alpha-D-glucose + diphosphate. Its pathway is capsule biogenesis; capsule polysaccharide biosynthesis. It participates in glycan biosynthesis; glycogen biosynthesis. Involved in the biosynthesis of ADP-glucose, a building block, required in the biosynthesis of maltose-1-phosphate (M1P) and in the elongation reactions to produce linear alpha-1,4-glucans. Catalyzes the reaction between ATP and alpha-D-glucose 1-phosphate (G1P) to produce pyrophosphate and ADP-Glc. The sequence is that of Glucose-1-phosphate adenylyltransferase from Mycobacterium marinum (strain ATCC BAA-535 / M).